A 338-amino-acid polypeptide reads, in one-letter code: MNLQRFPRYPLTFGPTPIQPLKRLSAHLGGKVDLYAKREDCNSGLAFGGNKTRKLEYLVPDALAQGADTLVSIGGVQSNQTRQVAAVAAHLGMKCVLVQEHWVNYEDPVYDRVGNIQLSRMMGADVRLVSDGFDIGIRRSWEEAMESVRQAGGKPYPIPAGCSEHPLGGLGFVGFAEEVRAQEAQLGFKFDYVVVCSVTGSTQAGMVVGFAADGRADRVIGIDASAKPEQTREQITRIARHTAELVELGRDIVEQDVVLDTRYGGPEYGLPSDGTLEAIRLCARLEGMLTDPVYEGKSMHGMIDKVRLGEFEPGSKVLYAHLGGAPALSAYNGIFRNG.

Residue Lys51 is modified to N6-(pyridoxal phosphate)lysine. Residue Ser78 is the Nucleophile of the active site.

This sequence belongs to the ACC deaminase/D-cysteine desulfhydrase family. As to quaternary structure, homotrimer. The cofactor is pyridoxal 5'-phosphate.

It carries out the reaction 1-aminocyclopropane-1-carboxylate + H2O = 2-oxobutanoate + NH4(+). Catalyzes a cyclopropane ring-opening reaction, the irreversible conversion of 1-aminocyclopropane-1-carboxylate (ACC) to ammonia and alpha-ketobutyrate. Allows growth on ACC as a nitrogen source. The sequence is that of 1-aminocyclopropane-1-carboxylate deaminase from Burkholderia cenocepacia (strain HI2424).